A 242-amino-acid chain; its full sequence is Transcription factor TCP17 (242 aa).

The 59-residue stretch at 33–91 folds into the TCP domain; it reads GKDRHSKVCTVRGLRDRRIRLSVMTAIQVYDLQERLGLSQPSKVIDWLLEVAKNDVDLL.

As to quaternary structure, interacts with SPL. As to expression, expressed in cotyledons, particularly in the vascular region, in leaves, roots, stems, buds, flowers and siliques.

Its subcellular location is the nucleus. In terms of biological role, plays a pivotal role in the control of morphogenesis of shoot organs by negatively regulating the expression of boundary-specific genes such as CUC genes, probably through the induction of miRNA (e.g. miR164). Participates in ovule development. In Arabidopsis thaliana (Mouse-ear cress), this protein is Transcription factor TCP17 (TCP17).